Consider the following 231-residue polypeptide: 7-cyano-7-deazaguanine synthase (231 aa).

8–18 (FSGGQDSTTCL) is an ATP binding site. 4 residues coordinate Zn(2+): C187, C196, C199, and C202.

This sequence belongs to the QueC family. It depends on Zn(2+) as a cofactor.

The enzyme catalyses 7-carboxy-7-deazaguanine + NH4(+) + ATP = 7-cyano-7-deazaguanine + ADP + phosphate + H2O + H(+). Its pathway is purine metabolism; 7-cyano-7-deazaguanine biosynthesis. Catalyzes the ATP-dependent conversion of 7-carboxy-7-deazaguanine (CDG) to 7-cyano-7-deazaguanine (preQ(0)). The chain is 7-cyano-7-deazaguanine synthase from Vibrio vulnificus (strain CMCP6).